We begin with the raw amino-acid sequence, 461 residues long: Cysteine--tRNA ligase (461 aa).

Residue Cys28 participates in Zn(2+) binding. Residues 30 to 40 carry the 'HIGH' region motif; that stretch reads ITVYDLCHIGH. Zn(2+) contacts are provided by Cys209, His234, and Glu238. The 'KMSKS' region signature appears at 266–270; that stretch reads KMSKS. An ATP-binding site is contributed by Lys269.

It belongs to the class-I aminoacyl-tRNA synthetase family. In terms of assembly, monomer. Zn(2+) serves as cofactor.

The protein localises to the cytoplasm. The enzyme catalyses tRNA(Cys) + L-cysteine + ATP = L-cysteinyl-tRNA(Cys) + AMP + diphosphate. The polypeptide is Cysteine--tRNA ligase (Cronobacter sakazakii (strain ATCC BAA-894) (Enterobacter sakazakii)).